The primary structure comprises 382 residues: MQFLSVIPEQVESAAQDLAGIRSALSASYAAAAGPTTAVVSAAEDEVSTAIASIFGAYGRQCQVLSAQASAFHDEFVNLLKTGATAYRNTEFANAQSNVLNAVNAPARSLLGHPSAAESVQNSAPTLGGGHSTVTAGLAAQAGRAVATVEQQAAAAVAPLPSAGAGLAQVVNGVVTAGQGSAAKLATALQSAAPWLAKSGGEFIVAGQSALTGVALLQPAVVGVVQAGGTFLTAGTSAATGLGLLTLAGVEFSQGVGNLALASGTAATGLGLLGSAGVQLFSPAFLLAVPTALGGVGSLAIAVVQLVQGVQHLSLVVPNVVAGIAALQTAGAQFAQGVNHTMLAAQLGAPGIAVLQTAGGHFAQGIGHLTTAGNAAVTVLIS.

Residues 1–92 (MQFLSVIPEQ…GATAYRNTEF (92 aa)) form the PE domain. 8 consecutive transmembrane segments (helical) span residues 23–43 (SALS…VSAA), 155–175 (AAVA…NGVV), 203–223 (FIVA…AVVG), 230–250 (TFLT…LAGV), 261–281 (LASG…VQLF), 284–304 (AFLL…IAVV), 315–335 (LVVP…AQFA), and 347–367 (LGAP…QGIG).

The protein belongs to the mycobacterial PE family.

The protein localises to the cell membrane. This is an uncharacterized protein from Mycobacterium bovis (strain ATCC BAA-935 / AF2122/97).